Reading from the N-terminus, the 115-residue chain is Phosphoribosyl-AMP cyclohydrolase (115 aa).

Mg(2+) is bound at residue Asp80. Cys81 provides a ligand contact to Zn(2+). Mg(2+) is bound by residues Asp82 and Asp84. 2 residues coordinate Zn(2+): Cys97 and Cys104.

The protein belongs to the PRA-CH family. Homodimer. It depends on Mg(2+) as a cofactor. Requires Zn(2+) as cofactor.

Its subcellular location is the cytoplasm. The catalysed reaction is 1-(5-phospho-beta-D-ribosyl)-5'-AMP + H2O = 1-(5-phospho-beta-D-ribosyl)-5-[(5-phospho-beta-D-ribosylamino)methylideneamino]imidazole-4-carboxamide. The protein operates within amino-acid biosynthesis; L-histidine biosynthesis; L-histidine from 5-phospho-alpha-D-ribose 1-diphosphate: step 3/9. Functionally, catalyzes the hydrolysis of the adenine ring of phosphoribosyl-AMP. The polypeptide is Phosphoribosyl-AMP cyclohydrolase (Mycobacterium leprae (strain Br4923)).